Reading from the N-terminus, the 1222-residue chain is Kinesin-related protein 9 (1222 aa).

Polar residues predominate over residues 1-25 (MDNNNNNFSTPKQPTINSTTGGQLR). Disordered stretches follow at residues 1 to 55 (MDNN…ITNS), 75 to 165 (MDSL…STNI), and 188 to 343 (SSNT…TQPL). Residues 26 to 55 (SRSNSSPSTSSISTPRNGSTTATTSSITNS) show a composition bias toward low complexity. Residues 75-85 (MDSLSTPMSQS) show a composition bias toward polar residues. 4 stretches are compositionally biased toward low complexity: residues 122 to 165 (SFIS…STNI), 194 to 209 (SSLP…PLSN), 216 to 238 (NHHL…ISTT), and 254 to 325 (NLTT…RTPI). Residues 326-343 (QNFNSVGGVNITSKTQPL) show a composition bias toward polar residues. One can recognise a Kinesin motor domain in the interval 350–719 (SIQAVCRFRP…LNFGQRAQSV (370 aa)). ATP is bound at residue 438–445 (GQTGAGKT). Residues 724 to 1026 (LQNVEESHSE…DTLTNKLEIQ (303 aa)) adopt a coiled-coil conformation. Residues 1144-1174 (NINNNNNIKNNNNNNKLKSKKVGSSSSSSSN) form a disordered region. A helical membrane pass occupies residues 1183–1203 (ILFFLIILVILFFLMVAVGLT).

This sequence belongs to the TRAFAC class myosin-kinesin ATPase superfamily. Kinesin family.

Its subcellular location is the membrane. The protein resides in the cytoplasm. The protein localises to the cytoskeleton. In terms of biological role, microtubule-associated force-producing protein that plays a role in organelle transport. Its motor activity is directed toward the microtubule's plus end. This is Kinesin-related protein 9 (kif9) from Dictyostelium discoideum (Social amoeba).